Here is a 1846-residue protein sequence, read N- to C-terminus: Brefeldin A-inhibited guanine nucleotide-exchange protein 1 (1846 aa).

The DCB; DCB:DCB domain and DCB:HUS domain interaction stretch occupies residues 2 to 224 (YEGKKTKNMF…QEAKQMERER (223 aa)). The residue at position 52 (Ser-52) is a Phosphoserine. Disordered regions lie at residues 217–248 (AKQM…HLRY), 264–302 (DLDP…DQAT), and 347–410 (VSAS…SPGA). Residues 267–277 (PQTHDVDKSLQ) show a composition bias toward basic and acidic residues. 5 positions are modified to phosphoserine: Ser-286, Ser-289, Ser-290, Ser-394, and Ser-407. Residues 391-406 (SVSSNDTQESGNSSGP) show a composition bias toward polar residues. Positions 554 to 574 (ADAQSVVDIYVNYDCDLNAAN) are HUS; DCB:HUS domain interaction. The disordered stretch occupies residues 631–684 (PNSQTTLGQEKPSEQEISEIKHPETINRYGSLNSLESTSSSGIGSYSTQMSGTD). The segment covering 641 to 655 (KPSEQEISEIKHPET) has biased composition (basic and acidic residues). Low complexity predominate over residues 661–681 (SLNSLESTSSSGIGSYSTQMS). The region spanning 688–877 (QFEVLKQQKE…SAIYNEIAGK (190 aa)) is the SEC7 domain. Positions 708–712 (KKPKR) match the Nuclear localization signal (NLS) motif. Residues Ser-1076, Ser-1563, and Ser-1566 each carry the phosphoserine modification. The interval 1571 to 1600 (DSAQPRSSDNRQQAPLVSVSPASEEVSKGR) is disordered. The span at 1574–1585 (QPRSSDNRQQAP) shows a compositional bias: polar residues.

Homodimer. Interacts with ARFGEF2/BIG2; both proteins are probably part of the same or very similar macromolecular complexes. Interacts with FKBP2. Interacts with MYO9B. Interacts with PRKAR1A and PRKAR2A. Interacts with PPP1CC. Interacts with NCL, FBL, NUP62 and U3 small nucleolar RNA. Interacts with DPY30. Interacts with PDE3A. Interacts with KANK1. Interacts with TBC1D22A and TBC1D22B. In terms of processing, phosphorylated. In vitro phosphorylated by PKA reducing its GEF activity and dephosphorylated by phosphatase PP1.

It is found in the cytoplasm. The protein localises to the perinuclear region. It localises to the golgi apparatus. The protein resides in the trans-Golgi network. Its subcellular location is the nucleus. It is found in the nucleolus. The protein localises to the nucleus matrix. It localises to the membrane. Inhibited by brefeldin A. Promotes guanine-nucleotide exchange on ARF1 and ARF3. Promotes the activation of ARF1/ARF3 through replacement of GDP with GTP. Involved in vesicular trafficking. Required for the maintenance of Golgi structure; the function may be independent of its GEF activity. Required for the maturation of integrin beta-1 in the Golgi. Involved in the establishment and persistence of cell polarity during directed cell movement in wound healing. Proposed to act as A kinase-anchoring protein (AKAP) and may mediate crosstalk between Arf and PKA pathways. Inhibits GAP activity of MYO9B probably through competitive RhoA binding. The function in the nucleus remains to be determined. The protein is Brefeldin A-inhibited guanine nucleotide-exchange protein 1 (Arfgef1) of Rattus norvegicus (Rat).